Consider the following 346-residue polypeptide: Elongation factor Ts (346 aa).

The segment at 80–83 (TDFV) is involved in Mg(2+) ion dislocation from EF-Tu.

It belongs to the EF-Ts family.

It is found in the cytoplasm. In terms of biological role, associates with the EF-Tu.GDP complex and induces the exchange of GDP to GTP. It remains bound to the aminoacyl-tRNA.EF-Tu.GTP complex up to the GTP hydrolysis stage on the ribosome. The protein is Elongation factor Ts of Streptococcus pyogenes serotype M1.